The chain runs to 52 residues: Metchnikowin (52 aa).

The N-terminal stretch at 1 to 24 is a signal peptide; it reads MQLNLGAIFLALLGVMATATSVLA. Residues 25 to 26 constitute a propeptide that is removed on maturation; sequence EP. Residues 28-52 are disordered; sequence RHQGPIFDTRPSPFNPNQPRPGPIY. Positions 40–52 are enriched in pro residues; the sequence is PFNPNQPRPGPIY.

Hemolymph (at protein level). Highest expression in fat body.

It localises to the secreted. Potent antifungal and antibacterial activity against Gram-positive bacteria. The sequence is that of Metchnikowin (Mtk) from Drosophila melanogaster (Fruit fly).